The chain runs to 369 residues: MKSGRFIGVMSGTSLDGVDVVLATIDEHRVAQLASLSWPIPVSLKQAVLDICQGQQLTLSQFGQLDTQLGRLFADAVNALLKEQNLQARDIVAIGCHGQTVWHEPTGVAPHTLQIGDNNQIVARTGITVVGDFRRRDIALGGQGAPLVPAFHHALLAHPTERRMVLNIGGIANLSLLITGQPVGGYDTGPGNMLMDAWIWRQAGKPYDKDAEWARAGKVILPLLQNMLCDPYFSQPAPKSTGREYFNYGWLERHLRHFPGGDPRDVQATLAELTAVTISEQVLLSGGCERLMVCGGGSRNPLLMARLAALLPGTEVTTTDAVGISGDDMEALAFAWLAWRTLAGLPGNLPSVTGASQETVLGAIFPANP.

12–19 (GTSLDGVD) contacts ATP.

Belongs to the anhydro-N-acetylmuramic acid kinase family.

The enzyme catalyses 1,6-anhydro-N-acetyl-beta-muramate + ATP + H2O = N-acetyl-D-muramate 6-phosphate + ADP + H(+). Its pathway is amino-sugar metabolism; 1,6-anhydro-N-acetylmuramate degradation. It functions in the pathway cell wall biogenesis; peptidoglycan recycling. In terms of biological role, catalyzes the specific phosphorylation of 1,6-anhydro-N-acetylmuramic acid (anhMurNAc) with the simultaneous cleavage of the 1,6-anhydro ring, generating MurNAc-6-P. Is required for the utilization of anhMurNAc either imported from the medium or derived from its own cell wall murein, and thus plays a role in cell wall recycling. The polypeptide is Anhydro-N-acetylmuramic acid kinase (Escherichia coli O6:K15:H31 (strain 536 / UPEC)).